Consider the following 358-residue polypeptide: Peptide chain release factor 1 (358 aa).

Glutamine 233 bears the N5-methylglutamine mark.

It belongs to the prokaryotic/mitochondrial release factor family. In terms of processing, methylated by PrmC. Methylation increases the termination efficiency of RF1.

Its subcellular location is the cytoplasm. Peptide chain release factor 1 directs the termination of translation in response to the peptide chain termination codons UAG and UAA. This chain is Peptide chain release factor 1, found in Listeria monocytogenes serotype 4b (strain CLIP80459).